Here is a 558-residue protein sequence, read N- to C-terminus: CTP synthase (558 aa).

An amidoligase domain region spans residues Met-1 to Leu-270. Position 13 (Ser-13) interacts with CTP. Position 13 (Ser-13) interacts with UTP. ATP-binding positions include Ser-14–Ile-19 and Asp-71. The Mg(2+) site is built by Asp-71 and Glu-144. CTP contacts are provided by residues Asp-151–Glu-153, Lys-191–Gln-196, and Lys-227. UTP contacts are provided by residues Lys-191–Gln-196 and Lys-227. In terms of domain architecture, Glutamine amidotransferase type-1 spans Thr-295–Lys-547. Gly-356 serves as a coordination point for L-glutamine. The active-site Nucleophile; for glutamine hydrolysis is the Cys-383. L-glutamine contacts are provided by residues Leu-384 to Gln-387, Glu-407, and Arg-473. Catalysis depends on residues His-520 and Glu-522.

Belongs to the CTP synthase family. In terms of assembly, homotetramer.

It carries out the reaction UTP + L-glutamine + ATP + H2O = CTP + L-glutamate + ADP + phosphate + 2 H(+). The enzyme catalyses L-glutamine + H2O = L-glutamate + NH4(+). The catalysed reaction is UTP + NH4(+) + ATP = CTP + ADP + phosphate + 2 H(+). The protein operates within pyrimidine metabolism; CTP biosynthesis via de novo pathway; CTP from UDP: step 2/2. With respect to regulation, allosterically activated by GTP, when glutamine is the substrate; GTP has no effect on the reaction when ammonia is the substrate. The allosteric effector GTP functions by stabilizing the protein conformation that binds the tetrahedral intermediate(s) formed during glutamine hydrolysis. Inhibited by the product CTP, via allosteric rather than competitive inhibition. Catalyzes the ATP-dependent amination of UTP to CTP with either L-glutamine or ammonia as the source of nitrogen. Regulates intracellular CTP levels through interactions with the four ribonucleotide triphosphates. This Polynucleobacter necessarius subsp. necessarius (strain STIR1) protein is CTP synthase.